A 1035-amino-acid chain; its full sequence is Potassium-transporting ATPase alpha chain 1 (1035 aa).

The tract at residues 1-41 (MGKAENYELYSVELGPGPGGDMAAKMSKKKKAGGGGGKRKE) is disordered. The Cytoplasmic segment spans residues 1–98 (MGKAENYELY…NALRPPRGTP (98 aa)). Residues Y7 and Y10 each carry the phosphotyrosine modification. Basic residues predominate over residues 26 to 40 (MSKKKKAGGGGGKRK). S27 carries the phosphoserine modification. The chain crosses the membrane as a helical span at residues 99-119 (EYVKFARQLAGGLQCLMWVAA). The Lumenal segment spans residues 120–142 (AICLIAFAIQASEGDLTTDDNLY). Residues 143-163 (LAIALIAVVVVTGCFGYYQEF) traverse the membrane as a helical segment. The Cytoplasmic portion of the chain corresponds to 164–299 (KSTNIIASFK…NEKTPIAIEI (136 aa)). A helical transmembrane segment spans residues 300-319 (EHFVDIIAGLAILFGATFFI). Residues 320–331 (VAMCIGYTFLRA) lie on the Lumenal side of the membrane. The helical transmembrane segment at 332–349 (MVFFMAIVVAYVPEGLLA) threads the bilayer. K(+)-binding residues include V340, A341, V343, and E345. Over 350-783 (TVTVCLSLTA…EQGRLIFDNL (434 aa)) the chain is Cytoplasmic. The active-site 4-aspartylphosphate intermediate is D387. Residues D387 and T389 each contribute to the Mg(2+) site. Phosphoserine occurs at positions 463 and 601. The Mg(2+) site is built by D728 and D732. A helical membrane pass occupies residues 784–803 (KKSIAYTLTKNIPELTPYLI). K(+) is bound at residue E797. Residues 804 to 813 (YITVSVPLPL) lie on the Lumenal side of the membrane. Residues 814–834 (GCITILFIELCTDIFPSVSLA) form a helical membrane-spanning segment. E822 provides a ligand contact to K(+). Topologically, residues 835 to 854 (YEKAESDIMHLRPRNPKRDR) are cytoplasmic. S840 bears the Phosphoserine mark. A helical transmembrane segment spans residues 855-877 (LVNEPLAAYSYFQIGAIQSFAGF). At 878 to 929 (TDYFTAMAQEGWFPLLCVGLRAQWEDHHLQDLQDSYGQEWTFGQRLYQQYTC) the chain is on the lumenal side. Residues 930–949 (YTVFFISIEVCQIADVLIRK) traverse the membrane as a helical segment. Residues 950-963 (TRRLSAFQQGFFRN) are Cytoplasmic-facing. Phosphoserine; by PKA is present on S954. Residues 964-982 (KILVIAIVFQVCIGCFLCY) form a helical membrane-spanning segment. At 983-997 (CPGMPNIFNFMPIRF) the chain is on the lumenal side. The chain crosses the membrane as a helical span at residues 998 to 1018 (QWWLVPLPYGILIFVYDEIRK). Residues 1019–1035 (LGVRCCPGSWWDQELYY) are Cytoplasmic-facing.

This sequence belongs to the cation transport ATPase (P-type) (TC 3.A.3) family. Type IIC subfamily. The gastric H(+)/K(+) ATPase pump is composed of the catalytic alpha subunit ATP4A and the regulatory beta subunit ATP4B. Interacts (via the P-domain) with ATP4B (via N-terminus); this interaction stabilizes the lumenal-open E2 conformation state and prevents the reverse reaction of the transport cycle. Expressed in gastric parietal cells (at protein level).

Its subcellular location is the apical cell membrane. It catalyses the reaction K(+)(out) + ATP + H2O + H(+)(in) = K(+)(in) + ADP + phosphate + 2 H(+)(out). In terms of biological role, the catalytic subunit of the gastric H(+)/K(+) ATPase pump which transports H(+) ions in exchange for K(+) ions across the apical membrane of parietal cells. Uses ATP as an energy source to pump H(+) ions to the gastric lumen while transporting K(+) ion from the lumen into the cell. Remarkably generates a million-fold proton gradient across the gastric parietal cell membrane, acidifying the gastric juice down to pH 1. Within a transport cycle, the transfer of a H(+) ion across the membrane is coupled to ATP hydrolysis and is associated with a transient phosphorylation that shifts the pump conformation from inward-facing (E1) to outward-facing state (E2). The release of the H(+) ion in the stomach lumen is followed by binding of K(+) ion converting the pump conformation back to the E1 state. In Homo sapiens (Human), this protein is Potassium-transporting ATPase alpha chain 1.